Consider the following 503-residue polypeptide: Opine oxidase subunit A (503 aa).

It to T-protein and to dimethylglycine dehydrogenase. As to quaternary structure, heterodimer of a subunit A and a subunit B.

The protein operates within opine metabolism; octopine degradation. In terms of biological role, oxidative cleavage of octopine into L-arginine and pyruvate. The sequence is that of Opine oxidase subunit A (ooxA) from Agrobacterium tumefaciens (strain Ach5).